The following is a 140-amino-acid chain: Methylglyoxal synthase (140 aa).

An MGS-like domain is found at 1-140; that stretch reads MNIALIAHDE…KERQEKEGTP (140 aa). Residues histidine 8, lysine 12, 34 to 37, and 54 to 55 each bind substrate; these read TGTT and SG. The active-site Proton donor/acceptor is the aspartate 60. Residue histidine 87 participates in substrate binding.

This sequence belongs to the methylglyoxal synthase family.

It catalyses the reaction dihydroxyacetone phosphate = methylglyoxal + phosphate. Functionally, catalyzes the formation of methylglyoxal from dihydroxyacetone phosphate. This chain is Methylglyoxal synthase, found in Oceanobacillus iheyensis (strain DSM 14371 / CIP 107618 / JCM 11309 / KCTC 3954 / HTE831).